The chain runs to 241 residues: Phosphoadenosine 5'-phosphosulfate reductase (241 aa).

Cys235 functions as the Nucleophile; cysteine thiosulfonate intermediate in the catalytic mechanism.

This sequence belongs to the PAPS reductase family. CysH subfamily.

The protein localises to the cytoplasm. The catalysed reaction is [thioredoxin]-disulfide + sulfite + adenosine 3',5'-bisphosphate + 2 H(+) = [thioredoxin]-dithiol + 3'-phosphoadenylyl sulfate. It participates in sulfur metabolism; hydrogen sulfide biosynthesis; sulfite from sulfate: step 3/3. Catalyzes the formation of sulfite from phosphoadenosine 5'-phosphosulfate (PAPS) using thioredoxin as an electron donor. In Xanthomonas euvesicatoria pv. vesicatoria (strain 85-10) (Xanthomonas campestris pv. vesicatoria), this protein is Phosphoadenosine 5'-phosphosulfate reductase.